Reading from the N-terminus, the 366-residue chain is Probable trehalose-phosphate phosphatase 3 (366 aa).

Belongs to the trehalose phosphatase family. A divalent metal cation serves as cofactor.

It carries out the reaction alpha,alpha-trehalose 6-phosphate + H2O = alpha,alpha-trehalose + phosphate. It functions in the pathway glycan biosynthesis; trehalose biosynthesis. Functionally, removes the phosphate from trehalose 6-phosphate to produce free trehalose. Trehalose accumulation in plant may improve abiotic stress tolerance. This is Probable trehalose-phosphate phosphatase 3 (TPP3) from Oryza sativa subsp. japonica (Rice).